Consider the following 203-residue polypeptide: UPF0637 protein SERP0693 (203 aa).

It belongs to the UPF0637 family.

The sequence is that of UPF0637 protein SERP0693 from Staphylococcus epidermidis (strain ATCC 35984 / DSM 28319 / BCRC 17069 / CCUG 31568 / BM 3577 / RP62A).